A 225-amino-acid polypeptide reads, in one-letter code: Proteasome activator 28 (225 aa).

It belongs to the PA28 family. In terms of assembly, homoheptamer. The homoheptamer associates with the 20S proteasome.

Its subcellular location is the nucleus. Functionally, subunit of the 11S REG (also called PA28) proteasome regulator, a doughnut-shaped homoheptamer which associates with the proteasome. 11S REG-gamma activates preferentially the trypsin-like catalytic subunit of the proteasome. May also be involved in cell cycle regulation. The polypeptide is Proteasome activator 28 (psmE3) (Dictyostelium discoideum (Social amoeba)).